Reading from the N-terminus, the 451-residue chain is Runt-related transcription factor 1 (451 aa).

The tract at residues 1-37 (MRIPVDASTSRRFTPPSTALSPGKMSEALPLGAPDGG) is disordered. The span at 7–20 (ASTSRRFTPPSTAL) shows a compositional bias: polar residues. Threonine 14 carries the phosphothreonine modification. The residue at position 21 (serine 21) is a Phosphoserine. Residues lysine 24 and lysine 43 each carry the N6-acetyllysine modification. A Runt domain is found at 50–178 (SMVEVLADHP…TVDGPREPRR (129 aa)). An interaction with DNA region spans residues 80-84 (RCNKT). 4 residues coordinate chloride: asparagine 112, glutamate 116, arginine 139, and valine 170. 2 interaction with DNA regions span residues 135–143 (RFVGRSGRG) and 168–177 (ITVDGPREPR). Disordered stretches follow at residues 170–195 (VDGP…LSFS) and 209–252 (MRVS…SPPW). Phosphoserine occurs at positions 193 and 212. The segment covering 222 to 247 (PRASLNHSTAFNPQPQSQMQDARQIQ) has biased composition (polar residues). Position 249 is a phosphoserine; by HIPK2 (serine 249). Serine 266 and serine 268 each carry phosphoserine. The disordered stretch occupies residues 268-290 (SVHPATPISPGRASGMTSLSAEL). Position 273 is a phosphothreonine; by HIPK2 (threonine 273). Residue serine 276 is modified to Phosphoserine; by HIPK2. The interval 291–370 (SSRLSTAPDL…SQAQAGPFQT (80 aa)) is interaction with KAT6A. Threonine 296 bears the Phosphothreonine mark. Positions 307-399 (RQFPTLPSIS…MVGGERSPPR (93 aa)) are interaction with KAT6B. The interval 361–401 (SQAQAGPFQTGSPSYHLYYGASAGSYQFSMVGGERSPPRIL) is interaction with FOXP3. Positions 406-451 (NASTGAALLNPSLPSQSDVVETEGSHSNSPTNMPPARLEEAVWRPY) are disordered. Residues 417-436 (SLPSQSDVVETEGSHSNSPT) are compositionally biased toward polar residues. The residue at position 434 (serine 434) is a Phosphoserine. Residues 442–451 (RLEEAVWRPY) show a composition bias toward basic and acidic residues.

Heterodimer with CBFB. RUNX1 binds DNA as a monomer and through the Runt domain. DNA-binding is increased by heterodimerization. Interacts with TLE1 and ALYREF/THOC4. Interacts with HIPK2, ELF1, ELF2 and SPI1. Interacts via its Runt domain with the ELF4 N-terminal region. Interaction with ELF2 isoform 2 (NERF-1a) may act to repress RUNX1-mediated transactivation. Interacts with KAT6A and KAT6B. Interacts with SUV39H1, leading to abrogation of transactivating and DNA-binding properties of RUNX1. Interacts with YAP1. Interaction with CDK6 prevents myeloid differentiation, reducing its transcription transactivation activity. Found in a complex with PRMT5, RUNX1 and CBFB. Interacts with FOXP3. Interacts with TBX21. Interacts with DPF2. In terms of processing, phosphorylated in its C-terminus upon IL-6 treatment. Phosphorylation enhances interaction with KAT6A. Post-translationally, methylated. Phosphorylated in Ser-249 Thr-273 and Ser-276 by HIPK2 when associated with CBFB and DNA. This phosphorylation promotes subsequent EP300 phosphorylation. As to expression, isoform 4 is expressed at high levels in thymus, spleen and T-cell lines and at lower levels in myeloid cell lines and nonhematopoietic cells. Isoform 5 is expressed ubiquitously in lumbar vertebrae, brain, kidney, heart, muscle, ovary and osteoblast-like cell line MC3T3-E1.

The protein localises to the nucleus. Forms the heterodimeric complex core-binding factor (CBF) with CBFB. RUNX members modulate the transcription of their target genes through recognizing the core consensus binding sequence 5'-TGTGGT-3', or very rarely, 5'-TGCGGT-3', within their regulatory regions via their runt domain, while CBFB is a non-DNA-binding regulatory subunit that allosterically enhances the sequence-specific DNA-binding capacity of RUNX. The heterodimers bind to the core site of a number of enhancers and promoters, including murine leukemia virus, polyomavirus enhancer, T-cell receptor enhancers, LCK, IL3 and GM-CSF promoters. Essential for the development of normal hematopoiesis. Acts synergistically with ELF4 to transactivate the IL-3 promoter and with ELF2 to transactivate the BLK promoter. Inhibits KAT6B-dependent transcriptional activation. Involved in lineage commitment of immature T cell precursors. CBF complexes repress ZBTB7B transcription factor during cytotoxic (CD8+) T cell development. They bind to RUNX-binding sequence within the ZBTB7B locus acting as transcriptional silencer and allowing for cytotoxic T cell differentiation. CBF complexes binding to the transcriptional silencer is essential for recruitment of nuclear protein complexes that catalyze epigenetic modifications to establish epigenetic ZBTB7B silencing. Controls the anergy and suppressive function of regulatory T-cells (Treg) by associating with FOXP3. Activates the expression of IL2 and IFNG and down-regulates the expression of TNFRSF18, IL2RA and CTLA4, in conventional T-cells. Positively regulates the expression of RORC in T-helper 17 cells. Its function is as follows. Isoform 4 shows higher binding activities for target genes and binds TCR-beta-E2 and RAG-1 target site with threefold higher affinity than other isoforms. It is less effective in the context of neutrophil terminal differentiation. The sequence is that of Runt-related transcription factor 1 (Runx1) from Mus musculus (Mouse).